We begin with the raw amino-acid sequence, 384 residues long: F-box only protein 5-B (384 aa).

2 disordered regions span residues 1–20 and 79–106; these read MMCG…KSSA and DEEN…ETDS. Over residues 9-19 the composition is skewed to low complexity; it reads PSPKKLLSKSS. Residues 83-99 are compositionally biased toward polar residues; that stretch reads SSLQDSGYSSILQNDSP. The 48-residue stretch at 191-238 folds into the F-box domain; the sequence is AELFHRDFKHLLTKILRHLNAMDLINVIGVSTTWRKILQKDNWAYNTY. The ZBR-type zinc-finger motif lies at 311–359; sequence SLKACVDCGSPAKYDSYLHRAICTRESCKLDFCTLCSCKYHSSKSCLIS. The Zn(2+) site is built by Cys-315, Cys-318, Cys-333, Cys-338, Cys-343, Cys-346, His-351, and Cys-356.

In terms of assembly, part of a SCF (SKP1-cullin-F-box) protein ligase complex. Interacts with btrc. Interacts with skp1. Interacts with cdc20. Interacts with pin1; stabilizes fbxo5 by preventing its association with btrc in an isomerization-dependent pathway; this interaction is present during G2 phase and prevents fbxo5 degradation. Interacts with plk1. In terms of processing, proteolysed; proteolysis is induced by both cyclin B-cdk1 and cyclin A-cdk1/2 complex through probable phosphorylation. Proteolysis is inhibited by pin1 during G2.

The protein resides in the nucleus. It is found in the cytoplasm. It localises to the cytoskeleton. Its subcellular location is the spindle. The protein localises to the microtubule organizing center. The protein resides in the centrosome. It functions in the pathway protein modification; protein ubiquitination. Its function is as follows. Regulates progression through early mitosis by inhibiting the anaphase promoting complex/cyclosome (APC). Binds to the APC activators cdc20 to prevent APC activation. Can also bind directly to the APC to inhibit substrate-binding. Required to arrest unfertilized eggs at metaphase of meiosis II, by preventing their release from metaphase of meiosis II, through inhibition of APC-dependent cyclin B destruction leading to stabilization of cyclin B-cdk1 complex activity. The protein is F-box only protein 5-B (fbxo5-b) of Xenopus laevis (African clawed frog).